A 468-amino-acid polypeptide reads, in one-letter code: Argininosuccinate lyase (468 aa).

Belongs to the lyase 1 family. Argininosuccinate lyase subfamily.

The protein localises to the cytoplasm. The enzyme catalyses 2-(N(omega)-L-arginino)succinate = fumarate + L-arginine. It participates in amino-acid biosynthesis; L-arginine biosynthesis; L-arginine from L-ornithine and carbamoyl phosphate: step 3/3. The polypeptide is Argininosuccinate lyase (Alkalilimnicola ehrlichii (strain ATCC BAA-1101 / DSM 17681 / MLHE-1)).